The primary structure comprises 126 residues: Nascent polypeptide-associated complex protein (126 aa).

The NAC-A/B domain maps to 10 to 77 (PRMMKQMQKM…AKKVAKAEEK (68 aa)).

Belongs to the NAC-alpha family. Homodimer. Interacts with the ribosome. Binds ribosomal RNA.

Functionally, contacts the emerging nascent chain on the ribosome. The chain is Nascent polypeptide-associated complex protein from Methanococcus maripaludis (strain C6 / ATCC BAA-1332).